The chain runs to 456 residues: Glycine--tRNA ligase (456 aa).

Substrate contacts are provided by Arg98 and Glu168. ATP-binding positions include 200 to 202, 210 to 215, 285 to 286, and 329 to 332; these read RNE, FRTREF, EL, and GVER. Residue 215–219 participates in substrate binding; the sequence is FEQME. Residue 325–329 participates in substrate binding; that stretch reads EPSVG.

Belongs to the class-II aminoacyl-tRNA synthetase family. Homodimer.

The protein resides in the cytoplasm. The enzyme catalyses tRNA(Gly) + glycine + ATP = glycyl-tRNA(Gly) + AMP + diphosphate. Its function is as follows. Catalyzes the attachment of glycine to tRNA(Gly). The chain is Glycine--tRNA ligase from Mycoplasma mycoides subsp. mycoides SC (strain CCUG 32753 / NCTC 10114 / PG1).